Here is a 324-residue protein sequence, read N- to C-terminus: MKPSIILYKTLPDDLLHRLEAHFTVTQVPNLHPETVARHAQAFSSAQGLLGASETVNRALLEKMSALRAASTISVGYDNVEVDALTARKIVLMHTPAVLTETVADTVMALMLATARRVVDVAERVKAGEWTESIGPAWFGVDVHHKTLGIVGMGRIGMALAQRAHFGFTMPVLYHARRRHQEAEDRFNARYCDLDTLLQEADFVCVILPLTAETRHLFGATQFARMKSSAIFINAGRGPVVDENALIAALQNGEIYAAGLDVFEQEPLSVDSPLLNMSNVVAVPHIGSATHETRYNMMACAVDNLIDALQGKIEKNCVNPQAAG.

Catalysis depends on residues Arg237 and Glu266. The active-site Proton donor is His285.

The protein belongs to the D-isomer specific 2-hydroxyacid dehydrogenase family. GhrB subfamily. In terms of assembly, homodimer.

It is found in the cytoplasm. It carries out the reaction glycolate + NADP(+) = glyoxylate + NADPH + H(+). It catalyses the reaction (R)-glycerate + NAD(+) = 3-hydroxypyruvate + NADH + H(+). The enzyme catalyses (R)-glycerate + NADP(+) = 3-hydroxypyruvate + NADPH + H(+). Catalyzes the NADPH-dependent reduction of glyoxylate and hydroxypyruvate into glycolate and glycerate, respectively. The polypeptide is Glyoxylate/hydroxypyruvate reductase B (Salmonella schwarzengrund (strain CVM19633)).